We begin with the raw amino-acid sequence, 556 residues long: M-phase inducer phosphatase (556 aa).

Disordered stretches follow at residues 165–186 (STDG…QERR) and 257–297 (TSGL…RPRK). Residues 287–297 (KSAHPNMRPRK) are compositionally biased toward basic residues. Residues 371–474 (MFDNIMIIDC…FFAEHRSLCY (104 aa)) enclose the Rhodanese domain. The active site involves Cys-421. Over residues 505–516 (RAQTFAFGQQSP) the composition is skewed to polar residues. The tract at residues 505 to 556 (RAQTFAFGQQSPEMEDSPTGRCRNNPGDRKLLASPFNDSPGSRFPGRRMLSY) is disordered.

This sequence belongs to the MPI phosphatase family.

It catalyses the reaction O-phospho-L-tyrosyl-[protein] + H2O = L-tyrosyl-[protein] + phosphate. In terms of biological role, this protein functions as a dosage-dependent inducer in mitotic control. It is a tyrosine protein phosphatase required for progression of the cell cycle. It may directly dephosphorylate p34(cdc2) and activate the p34(cdc2) kinase activity. In Emericella nidulans (strain FGSC A4 / ATCC 38163 / CBS 112.46 / NRRL 194 / M139) (Aspergillus nidulans), this protein is M-phase inducer phosphatase (nimT).